The primary structure comprises 293 residues: Fructose-bisphosphate aldolase class 1 (293 aa).

The active-site Proton acceptor is the Glu176. Residue Lys211 is the Schiff-base intermediate with dihydroxyacetone-P of the active site.

The protein belongs to the class I fructose-bisphosphate aldolase family.

The catalysed reaction is beta-D-fructose 1,6-bisphosphate = D-glyceraldehyde 3-phosphate + dihydroxyacetone phosphate. It participates in carbohydrate degradation; glycolysis; D-glyceraldehyde 3-phosphate and glycerone phosphate from D-glucose: step 4/4. In Porphyromonas gingivalis (strain ATCC 33277 / DSM 20709 / CIP 103683 / JCM 12257 / NCTC 11834 / 2561), this protein is Fructose-bisphosphate aldolase class 1.